Reading from the N-terminus, the 363-residue chain is Ferrochelatase (363 aa).

The Fe cation site is built by histidine 209 and glutamate 290.

The protein belongs to the ferrochelatase family.

It is found in the cytoplasm. The catalysed reaction is heme b + 2 H(+) = protoporphyrin IX + Fe(2+). Its pathway is porphyrin-containing compound metabolism; protoheme biosynthesis; protoheme from protoporphyrin-IX: step 1/1. Its function is as follows. Catalyzes the ferrous insertion into protoporphyrin IX. In Azoarcus sp. (strain BH72), this protein is Ferrochelatase.